A 557-amino-acid polypeptide reads, in one-letter code: Inositol-3-phosphate synthase 1 (557 aa).

NAD(+)-binding residues include Gly-67, Gly-68, Asn-69, Asn-70, Asp-141, Ser-177, Val-178, Gln-188, Arg-191, Thr-228, Ala-229, Asn-230, Thr-231, Gly-278, Ser-279, Asp-303, Ser-306, Asn-337, Asn-338, Asp-339, and Lys-352. Position 279 is a phosphoserine (Ser-279). Residue Ser-357 is modified to Phosphoserine. Positions 390, 391, 419, and 420 each coordinate NAD(+). The segment at Gly-512–Ala-557 is disordered. Ser-524 carries the post-translational modification Phosphoserine.

The protein belongs to the myo-inositol 1-phosphate synthase family. NAD(+) is required as a cofactor. In testis, it is expressed in Sertoli cells. Highly expressed in 2 types of germ cells, pachytene spermatocytes and round spermatids.

It is found in the cytoplasm. The enzyme catalyses D-glucose 6-phosphate = 1D-myo-inositol 3-phosphate. It functions in the pathway polyol metabolism; myo-inositol biosynthesis; myo-inositol from D-glucose 6-phosphate: step 1/2. Key enzyme in myo-inositol biosynthesis pathway that catalyzes the conversion of glucose 6-phosphate to 1-myo-inositol 1-phosphate in a NAD-dependent manner. Rate-limiting enzyme in the synthesis of all inositol-containing compounds. The protein is Inositol-3-phosphate synthase 1 (Isyna1) of Mus musculus (Mouse).